A 775-amino-acid polypeptide reads, in one-letter code: Melanoma-associated antigen D1 (775 aa).

The segment at 37–330 (SEAPPTSQAT…PARQTPSAWQ (294 aa)) is disordered. Residues 39-50 (APPTSQATAAAS) are compositionally biased toward low complexity. Polar residues-rich tracts occupy residues 52 to 63 (PNASPQSSQPPT), 84 to 100 (KAQN…SQAR), 107 to 120 (KNQS…QNGT), 149 to 178 (GQNS…NQPK), 221 to 235 (AQTS…NVES), 247 to 258 (VNNLNVEENNSG), and 296 to 308 (LAWQ…QNQT). 19 repeat units span residues 292–297 (WQTPLA), 298–303 (WQNPSG), 304–309 (WQNQTA), 329–334 (WQNPVA), 335–340 (WQNPVI), 341–346 (WPNPVI), 347–352 (WQNPVI), 353–358 (WPNPIV), 359–364 (WPGPIV), 365–370 (WPNPMA), 371–376 (WQSTPG), 377–382 (WQSPPS), 383–388 (WQAPPS), 389–394 (WQSPQD), 395–400 (WQGPPD), 401–406 (WQVPPD), 407–412 (WSMPPD), 413–418 (WSFPSD), and 419–424 (WPFPPD). Positions 292–441 (WQTPLAWQNP…IPPDWQNLRP (150 aa)) are 22 X 6 AA tandem repeats of W-[PQ]-X-P-X-X. Positions 309–326 (ARQTPPAARQSPPARQTP) are enriched in low complexity. The interval 374 to 409 (TPGWQSPPSWQAPPSWQSPQDWQGPPDWQVPPDWSM) is disordered. The span at 375–406 (PGWQSPPSWQAPPSWQSPQDWQGPPDWQVPPD) shows a compositional bias: low complexity. A 20; approximate repeat occupies 425–429 (WIPAD). A run of 2 repeats spans residues 430 to 435 (WPIPPD) and 436 to 441 (WQNLRP). Over residues 437–452 (QNLRPSPNLRSSSNSR) the composition is skewed to low complexity. A disordered region spans residues 437–463 (QNLRPSPNLRSSSNSRASQNQGPPQPR). The 199-residue stretch at 468–666 (LQERANKLVK…RDWTAQFMEA (199 aa)) folds into the MAGE domain.

As to quaternary structure, interacts with DLX5, DLX7 and MSX2 and forms homomultimers. Interacts with UNC5A. Interacts with TRIM28 and PJA1. Interacts with NGFR/p75NTR and RORA. As to expression, ubiquitously expressed in many adult tissues, except for the spleen. Expressed in osteoblastic and chondrogenic cell lines and also during embryonic development.

Its subcellular location is the nucleus. It is found in the cytoplasm. The protein resides in the cell membrane. Involved in the apoptotic response after nerve growth factor (NGF) binding in neuronal cells. Inhibits cell cycle progression, and facilitates NGFR-mediated apoptosis. May act as a regulator of the function of DLX family members. May enhance ubiquitin ligase activity of RING-type zinc finger-containing E3 ubiquitin-protein ligases. Proposed to act through recruitment and/or stabilization of the Ubl-conjugating enzyme (E2) at the E3:substrate complex. Plays a role in the circadian rhythm regulation. May act as RORA coregulator, modulating the expression of core clock genes such as BMAL1 and NFIL3, induced, or NR1D1, repressed. In Mus musculus (Mouse), this protein is Melanoma-associated antigen D1 (Maged1).